A 199-amino-acid chain; its full sequence is Photosystem I reaction center subunit XI (199 aa).

2 helical membrane passes run 108-128 and 165-185; these read ITAG…LLVL and FWLG…TLHL.

This sequence belongs to the PsaL family.

It localises to the cellular thylakoid membrane. This chain is Photosystem I reaction center subunit XI, found in Prochlorococcus marinus (strain MIT 9515).